The sequence spans 299 residues: NAD kinase 1 (299 aa).

The active-site Proton acceptor is aspartate 62. NAD(+) is bound by residues 62 to 63 (DG), lysine 67, 143 to 144 (ND), lysine 173, and aspartate 175.

The protein belongs to the NAD kinase family. A divalent metal cation serves as cofactor.

The protein resides in the cytoplasm. The catalysed reaction is NAD(+) + ATP = ADP + NADP(+) + H(+). In terms of biological role, involved in the regulation of the intracellular balance of NAD and NADP, and is a key enzyme in the biosynthesis of NADP. Catalyzes specifically the phosphorylation on 2'-hydroxyl of the adenosine moiety of NAD to yield NADP. The chain is NAD kinase 1 from Prochlorococcus marinus subsp. pastoris (strain CCMP1986 / NIES-2087 / MED4).